A 357-amino-acid chain; its full sequence is Naringenin,2-oxoglutarate 3-dioxygenase (357 aa).

The Fe2OG dioxygenase domain occupies 189 to 293 (CVDMDQKIVV…RLSIATFQNP (105 aa)). Histidine 216, aspartate 218, and histidine 274 together coordinate Fe cation. Arginine 284 is a 2-oxoglutarate binding site.

It belongs to the iron/ascorbate-dependent oxidoreductase family. Fe(2+) serves as cofactor. The cofactor is L-ascorbate.

The catalysed reaction is a (2S)-flavan-4-one + 2-oxoglutarate + O2 = a (2R,3R)-dihydroflavonol + succinate + CO2. The protein operates within secondary metabolite biosynthesis; flavonoid biosynthesis. Its function is as follows. Catalyzes the 3-beta-hydroxylation of 2S-flavanones to 2R,3R-dihydroflavonols which are intermediates in the biosynthesis of flavonols, anthocyanidins, catechins and proanthocyanidins in plants. This chain is Naringenin,2-oxoglutarate 3-dioxygenase (FHT), found in Matthiola incana (Common stock).